The following is a 153-amino-acid chain: Alpha-amylase inhibitor 0.28 (153 aa).

The N-terminal stretch at 1–30 (MWMKTVFWGLLVFMLVATTMAVEYGARSHN) is a signal peptide. Disulfide bonds link C37–C84, C51–C72, C59–C112, C73–C128, and C86–C143.

It belongs to the protease inhibitor I6 (cereal trypsin/alpha-amylase inhibitor) family. Monomer. The disulfide bonds are essential for the inhibitor activity. Endosperm.

The protein resides in the secreted. Alpha-amylase inhibitor. The polypeptide is Alpha-amylase inhibitor 0.28 (IMA1) (Triticum aestivum (Wheat)).